The following is an 822-amino-acid chain: Nucleolar complex protein 3 (822 aa).

3 disordered regions span residues 1–86 (MGTK…DGDD), 106–142 (ANKR…KEQD), and 172–199 (KPKQ…EDSD). Basic residues predominate over residues 13–23 (RAAHLKSKKTP). Basic and acidic residues predominate over residues 35 to 45 (KRDQLKSKREQ). The Nuclear localization signal motif lies at 41–48 (SKREQGQN). Over residues 76 to 86 (PLEEDNEDGDD) the composition is skewed to acidic residues. Positions 116–126 (TGENDPDQGQS) are enriched in polar residues. Acidic residues predominate over residues 181–199 (EEEEDDSEEDGDTEYEDSD). Serine 187 is modified (phosphoserine). A Phosphothreonine modification is found at threonine 193. Residue serine 198 is modified to Phosphoserine. Residues 445–509 (KIKNVNLDAE…NKQAKHQKLT (65 aa)) are a coiled coil.

Belongs to the CBF/MAK21 family.

The protein localises to the nucleus. The protein resides in the nucleolus. In Drosophila melanogaster (Fruit fly), this protein is Nucleolar complex protein 3.